Here is a 238-residue protein sequence, read N- to C-terminus: Pyridoxine 5'-phosphate synthase (238 aa).

3-amino-2-oxopropyl phosphate is bound by residues N7 and R18. H43 serves as the catalytic Proton acceptor. 2 residues coordinate 1-deoxy-D-xylulose 5-phosphate: R45 and H50. E70 serves as the catalytic Proton acceptor. A 1-deoxy-D-xylulose 5-phosphate-binding site is contributed by T100. The active-site Proton donor is H190. Residues D191 and 213 to 214 (GH) each bind 3-amino-2-oxopropyl phosphate.

This sequence belongs to the PNP synthase family. As to quaternary structure, homooctamer; tetramer of dimers.

It localises to the cytoplasm. The enzyme catalyses 3-amino-2-oxopropyl phosphate + 1-deoxy-D-xylulose 5-phosphate = pyridoxine 5'-phosphate + phosphate + 2 H2O + H(+). It functions in the pathway cofactor biosynthesis; pyridoxine 5'-phosphate biosynthesis; pyridoxine 5'-phosphate from D-erythrose 4-phosphate: step 5/5. In terms of biological role, catalyzes the complicated ring closure reaction between the two acyclic compounds 1-deoxy-D-xylulose-5-phosphate (DXP) and 3-amino-2-oxopropyl phosphate (1-amino-acetone-3-phosphate or AAP) to form pyridoxine 5'-phosphate (PNP) and inorganic phosphate. The sequence is that of Pyridoxine 5'-phosphate synthase from Phocaeicola vulgatus (strain ATCC 8482 / DSM 1447 / JCM 5826 / CCUG 4940 / NBRC 14291 / NCTC 11154) (Bacteroides vulgatus).